The sequence spans 430 residues: Tyrosine--tRNA ligase (430 aa).

Y32 is an L-tyrosine binding site. The short motif at 37–46 (PTADSLHIGH) is the 'HIGH' region element. Residues Y172 and Q176 each coordinate L-tyrosine. The 'KMSKS' region motif lies at 232–236 (KFGKT). K235 serves as a coordination point for ATP. The S4 RNA-binding domain maps to 362 to 430 (ISLVDLLADA…KKSYYLIIVE (69 aa)).

This sequence belongs to the class-I aminoacyl-tRNA synthetase family. TyrS type 1 subfamily. Homodimer.

The protein localises to the cytoplasm. It carries out the reaction tRNA(Tyr) + L-tyrosine + ATP = L-tyrosyl-tRNA(Tyr) + AMP + diphosphate + H(+). Catalyzes the attachment of tyrosine to tRNA(Tyr) in a two-step reaction: tyrosine is first activated by ATP to form Tyr-AMP and then transferred to the acceptor end of tRNA(Tyr). The sequence is that of Tyrosine--tRNA ligase from Porphyromonas gingivalis (strain ATCC BAA-308 / W83).